A 100-amino-acid chain; its full sequence is Large ribosomal subunit protein uL23 (100 aa).

This sequence belongs to the universal ribosomal protein uL23 family. In terms of assembly, part of the 50S ribosomal subunit. Contacts protein L29, and trigger factor when it is bound to the ribosome.

Its function is as follows. One of the early assembly proteins it binds 23S rRNA. One of the proteins that surrounds the polypeptide exit tunnel on the outside of the ribosome. Forms the main docking site for trigger factor binding to the ribosome. In Vibrio vulnificus (strain CMCP6), this protein is Large ribosomal subunit protein uL23.